Consider the following 597-residue polypeptide: Aspartate--tRNA ligase (597 aa).

Glutamate 171 is an L-aspartate binding site. An aspartate region spans residues 195–198 (QLFK). Arginine 217 is a binding site for L-aspartate. Residues 217-219 (RDE) and glutamine 226 each bind ATP. Residue histidine 448 coordinates L-aspartate. Glutamate 482 serves as a coordination point for ATP. Residue arginine 489 participates in L-aspartate binding. 534-537 (GLDR) is a binding site for ATP.

Belongs to the class-II aminoacyl-tRNA synthetase family. Type 1 subfamily. In terms of assembly, homodimer.

It localises to the cytoplasm. The enzyme catalyses tRNA(Asp) + L-aspartate + ATP = L-aspartyl-tRNA(Asp) + AMP + diphosphate. In terms of biological role, catalyzes the attachment of L-aspartate to tRNA(Asp) in a two-step reaction: L-aspartate is first activated by ATP to form Asp-AMP and then transferred to the acceptor end of tRNA(Asp). The polypeptide is Aspartate--tRNA ligase (Photobacterium profundum (strain SS9)).